The chain runs to 144 residues: MLTPKRVKHRKQHRGKMAGNAKGGTTVAFGEYGLQAMEPSWVTNRQIEAARIAMTRYIKRGGKVWIKIFPDKPVTQKPLEVRMGSGKGSPEKWVAVVKPGKIMFELAGVPEEVAREAMRLAMHKLPIKCKFVKREEVGGDAHEG.

Residues 1 to 16 are compositionally biased toward basic residues; that stretch reads MLTPKRVKHRKQHRGK. The tract at residues 1–22 is disordered; sequence MLTPKRVKHRKQHRGKMAGNAK.

This sequence belongs to the universal ribosomal protein uL16 family. Part of the 50S ribosomal subunit.

Its function is as follows. Binds 23S rRNA and is also seen to make contacts with the A and possibly P site tRNAs. This Brevibacillus brevis (strain 47 / JCM 6285 / NBRC 100599) protein is Large ribosomal subunit protein uL16.